A 114-amino-acid chain; its full sequence is MTRVKRGNVARKRRKKILKLASGFRGAHSRLFRVANQQVMKALRYAYNDRNKRKRDFRALWIARINASARLEGMTYSKLMGSLKKLNIILNRKSLSQLAIYDKDAFMEILKTIP.

The protein belongs to the bacterial ribosomal protein bL20 family.

The protein localises to the plastid. It is found in the cyanelle. Its function is as follows. Binds directly to 23S ribosomal RNA and is necessary for the in vitro assembly process of the 50S ribosomal subunit. It is not involved in the protein synthesizing functions of that subunit. This Cyanophora paradoxa protein is Large ribosomal subunit protein bL20c (rpl20).